The sequence spans 276 residues: Formamidopyrimidine-DNA glycosylase (276 aa).

Pro2 functions as the Schiff-base intermediate with DNA in the catalytic mechanism. Glu3 acts as the Proton donor in catalysis. Lys58 acts as the Proton donor; for beta-elimination activity in catalysis. DNA is bound by residues His92, Arg111, and Lys154. An FPG-type zinc finger spans residues 239–273; that stretch reads QVYGHVGEPCPVCGTKFEKIKVNGRGTTFCPHCQV. Residue Arg263 is the Proton donor; for delta-elimination activity of the active site.

It belongs to the FPG family. In terms of assembly, monomer. It depends on Zn(2+) as a cofactor.

The enzyme catalyses Hydrolysis of DNA containing ring-opened 7-methylguanine residues, releasing 2,6-diamino-4-hydroxy-5-(N-methyl)formamidopyrimidine.. It carries out the reaction 2'-deoxyribonucleotide-(2'-deoxyribose 5'-phosphate)-2'-deoxyribonucleotide-DNA = a 3'-end 2'-deoxyribonucleotide-(2,3-dehydro-2,3-deoxyribose 5'-phosphate)-DNA + a 5'-end 5'-phospho-2'-deoxyribonucleoside-DNA + H(+). In terms of biological role, involved in base excision repair of DNA damaged by oxidation or by mutagenic agents. Acts as a DNA glycosylase that recognizes and removes damaged bases. Has a preference for oxidized purines, such as 7,8-dihydro-8-oxoguanine (8-oxoG). Has AP (apurinic/apyrimidinic) lyase activity and introduces nicks in the DNA strand. Cleaves the DNA backbone by beta-delta elimination to generate a single-strand break at the site of the removed base with both 3'- and 5'-phosphates. This is Formamidopyrimidine-DNA glycosylase from Lactobacillus helveticus (strain DPC 4571).